A 237-amino-acid polypeptide reads, in one-letter code: Ribosomal RNA small subunit methyltransferase G (237 aa).

Residues glycine 78, phenylalanine 83, 129–130, and arginine 148 contribute to the S-adenosyl-L-methionine site; that span reads AE.

This sequence belongs to the methyltransferase superfamily. RNA methyltransferase RsmG family.

Its subcellular location is the cytoplasm. In terms of biological role, specifically methylates the N7 position of a guanine in 16S rRNA. In Streptococcus pyogenes serotype M2 (strain MGAS10270), this protein is Ribosomal RNA small subunit methyltransferase G.